The chain runs to 312 residues: Small kinetochore-associated protein (312 aa).

Residues 1 to 13 (MATHKAEAQETDF) are compositionally biased toward basic and acidic residues. Disordered stretches follow at residues 1 to 32 (MATH…PSSR), 55 to 176 (LKRS…KDKN), and 221 to 242 (KGLN…DPTD). Residues 75 to 84 (RPTTMASSKT) show a composition bias toward polar residues. 2 stretches are compositionally biased toward basic and acidic residues: residues 131 to 143 (DVTK…RENG) and 166 to 176 (QKPEEDLKDKN). The interval 156 to 312 (IRSSYKPLSK…LEEMEQLLEM (157 aa)) is interaction with SPAG5. Residues 169–210 (EEDLKDKNELLEAVNKQLHQKLTETQGELKDLTQKVELLEKF) adopt a coiled-coil conformation. Residues 246 to 288 (LLETLKDELKLFNETAKKQMEELQALKVKLKLKEKERIQFLEQ) adopt a coiled-coil conformation.

Part of an astrin (SPAG5)-kinastrin (SKAP) complex containing KNSTRN, SPAG5, PLK1, DYNLL1 and SGO2. Interacts with SPAG5. Directly binds to microtubules, although at relatively low affinity. Interacts with CENPE; this interaction greatly favors microtubule-binding. Interacts with DSN1/MIS13; leading to localization to kinetochores. Interacts with MAPRE1/EB1; leading to localization to the microtubule plus ends. Interacts with PRPF19. Interacts with DYNLL1. Interacts with MAP4.

The protein resides in the nucleus. Its subcellular location is the chromosome. It is found in the centromere. The protein localises to the kinetochore. It localises to the cytoplasm. The protein resides in the cytoskeleton. Its subcellular location is the spindle pole. It is found in the microtubule organizing center. Functionally, essential component of the mitotic spindle required for faithful chromosome segregation and progression into anaphase. Promotes the metaphase-to-anaphase transition and is required for chromosome alignment, normal timing of sister chromatid segregation, and maintenance of spindle pole architecture. The astrin (SPAG5)-kinastrin (SKAP) complex promotes stable microtubule-kinetochore attachments. Required for kinetochore oscillations and dynamics of microtubule plus-ends during live cell mitosis, possibly by forming a link between spindle microtubule plus-ends and mitotic chromosomes to achieve faithful cell division. This Rattus norvegicus (Rat) protein is Small kinetochore-associated protein (Knstrn).